Here is a 230-residue protein sequence, read N- to C-terminus: Prolactin-6A1 (230 aa).

The N-terminal stretch at 1–29 is a signal peptide; the sequence is MLSLSQPCFSGTLLMLLASNFLLWKNVAP. Asn57 carries an N-linked (GlcNAc...) asparagine glycan. 2 disulfide bridges follow: Cys89-Cys205 and Cys222-Cys230.

It belongs to the somatotropin/prolactin family. Expressed in both placenta and decidual tissues. Detected first in deciduals cells early in gestation and in trophoblasts later in pregnancy.

It localises to the secreted. This Mus musculus (Mouse) protein is Prolactin-6A1 (Prl6a1).